A 348-amino-acid polypeptide reads, in one-letter code: UDP-3-O-acylglucosamine N-acyltransferase (348 aa).

H241 (proton acceptor) is an active-site residue.

The protein belongs to the transferase hexapeptide repeat family. LpxD subfamily. In terms of assembly, homotrimer.

The catalysed reaction is a UDP-3-O-[(3R)-3-hydroxyacyl]-alpha-D-glucosamine + a (3R)-hydroxyacyl-[ACP] = a UDP-2-N,3-O-bis[(3R)-3-hydroxyacyl]-alpha-D-glucosamine + holo-[ACP] + H(+). It participates in bacterial outer membrane biogenesis; LPS lipid A biosynthesis. Functionally, catalyzes the N-acylation of UDP-3-O-acylglucosamine using 3-hydroxyacyl-ACP as the acyl donor. Is involved in the biosynthesis of lipid A, a phosphorylated glycolipid that anchors the lipopolysaccharide to the outer membrane of the cell. This chain is UDP-3-O-acylglucosamine N-acyltransferase, found in Neisseria meningitidis serogroup C / serotype 2a (strain ATCC 700532 / DSM 15464 / FAM18).